Consider the following 1024-residue polypeptide: MNFIKDNSRALIQRMGMTVIKQITDDLFVWNVLNREEVNIICCEKVEQDAARGIIHMILKKGSESCNLFLKSLKEWNYPLFQDLNGQSLFHQTSEGDLDDLAQDLKDLYHTPSFLNFYPLGEDIDIIFNLKSTFTEPVLWRKDQHHHRVEQLTLNGLLQALQSPCIIEGESGKGKSTLLQRIAMLWGSGKCKALTKFKFVFFLRLSRAQGGLFETLCDQLLDIPGTIRKQTFMAMLLKLRQRVLFLLDGYNEFKPQNCPEIEALIKENHRFKNMVIVTTTTECLRHIRQFGALTAEVGDMTEDSAQALIREVLIKELAEGLLLQIQKSRCLRNLMKTPLFVVITCAIQMGESEFHSHTQTTLFHTFYDLLIQKNKHKHKGVAASDFIRSLDHCGDLALEGVFSHKFDFELQDVSSVNEDVLLTTGLLCKYTAQRFKPKYKFFHKSFQEYTAGRRLSSLLTSHEPEEVTKGNGYLQKMVSISDITSTYSSLLRYTCGSSVEATRAVMKHLAAVYQHGCLLGLSIAKRPLWRQESLQSVKNTTEQEILKAININSFVECGIHLYQESTSKSALSQEFEAFFQGKSLYINSGNIPDYLFDFFEHLPNCASALDFIKLDFYGGAMASWEKAAEDTGGIHMEEAPETYIPSRAVSLFFNWKQEFRTLEVTLRDFSKLNKQDIRYLGKIFSSATSLRLQIKRCAGVAGSLSLVLSTCKNIYSLMVEASPLTIEDERHITSVTNLKTLSIHDLQNQRLPGGLTDSLGNLKNLTKLIMDNIKMNEEDAIKLAEGLKNLKKMCLFHLTHLSDIGEGMDYIVKSLSSEPCDLEEIQLVSCCLSANAVKILAQNLHNLVKLSILDLSENYLEKDGNEALHELIDRMNVLEQLTALMLPWGCDVQGSLSSLLKHLEEVPQLVKLGLKNWRLTDTEIRILGAFFGKNPLKNFQQLNLAGNRVSSDGWLAFMGVFENLKQLVFFDFSTKEFLPDPALVRKLSQVLSKLTFLQEARLVGWQFDDDDLSVITGAFKLVTA.

Positions 1-88 (MNFIKDNSRA…PLFQDLNGQS (88 aa)) constitute a CARD domain. The segment at 95 to 298 (EGDLDDLAQD…QFGALTAEVG (204 aa)) is nucleotide-binding domain (NBD). The 314-residue stretch at 163 to 476 (SPCIIEGESG…VTKGNGYLQK (314 aa)) folds into the NACHT domain. 169–176 (GESGKGKS) is an ATP binding site. The segment at 356–463 (SHTQTTLFHT…RLSSLLTSHE (108 aa)) is winged-helix domain (WHD). Ser533 is subject to Phosphoserine. 12 LRR repeats span residues 578–598 (FFQG…LFDF), 656–679 (KQEF…DIRY), 735–758 (VTNL…LTDS), 762–785 (LKNL…KLAE), 787–812 (LKNL…DYIV), 824–847 (EIQL…LHNL), 848–870 (VKLS…ALHE), 878–902 (LEQL…LLKH), 911–933 (KLGL…FFGK), 936–963 (LKNF…VFEN), 965–985 (KQLV…ALVR), and 999–1021 (EARL…AFKL).

As to quaternary structure, homooligomer; homooligomerizes to induce formation of the NLRC4 inflammasome. Homooligomerizes following activation by pathogenic proteins. Component of the NLRC4 inflammasome, at least composed of NLRC4 and caspase-1 (CASP1). Some NLRC4 inflammasomes contain PYCARD/ASC, while some others directly contact and activate CASP1. Interacts (via CARD domain) with PYCARD/ASC, pro-caspase-1 (CASP1), NOD2, BCL10 and NALP1 (NAC) by CARD-CARD interaction. Interacts with EIF2AK2/PKR. Post-translationally, phosphorylated at Ser-533 following infection of macrophages with S.typhimurium (Salmonella). Phosphorylation is essential for NLRC4 inflammasome function to promote caspase-1 activation and pyroptosis. PRKCD phosphorylates Ser-533 in vitro. As to expression, isoform 2 is expressed ubiquitously, although highly expressed in lung and spleen. Isoform 1 is highly expressed in lung, followed by leukocytes especially monocytes, lymph node, colon, brain, prostate, placenta, spleen, bone marrow and fetal liver. Isoform 4 is only detected in brain.

Its subcellular location is the cytoplasm. It is found in the cytosol. The protein resides in the inflammasome. In terms of biological role, key component of inflammasomes that indirectly senses specific proteins from pathogenic bacteria and fungi and responds by assembling an inflammasome complex that promotes caspase-1 activation, cytokine production and macrophage pyroptosis. The NLRC4 inflammasome is activated as part of the innate immune response to a range of intracellular bacteria. The chain is NLR family CARD domain-containing protein 4 (NLRC4) from Homo sapiens (Human).